A 481-amino-acid chain; its full sequence is Cerebral cavernous malformations 2 protein-like (481 aa).

Disordered regions lie at residues 161 to 193 (PVPA…GTAE) and 214 to 290 (EARA…DPQN). The segment covering 184 to 193 (PEKRRVGTAE) has biased composition (basic and acidic residues). The segment covering 214-223 (EARAAGGGGS) has biased composition (gly residues). The span at 237-251 (WERRQTFSGSWERRH) shows a compositional bias: basic and acidic residues.

This sequence belongs to the CCM2 family.

The chain is Cerebral cavernous malformations 2 protein-like (Ccm2l) from Mus musculus (Mouse).